The following is a 460-amino-acid chain: Anthocyanidin 3-O-glucoside 5-O-glucosyltransferase 1 (460 aa).

An N-terminal signal peptide occupies residues 1-22; sequence MVRRRVLLATFPAQGHINPALQ. The active-site Proton acceptor is the histidine 16. Histidine 16 is an an anthocyanidin binding site. UDP-alpha-D-glucose contacts are provided by glutamine 338, histidine 353, tryptophan 356, asparagine 357, serine 358, glutamate 361, aspartate 377, and glutamine 378.

This sequence belongs to the UDP-glycosyltransferase family.

The catalysed reaction is an anthocyanidin 3-O-beta-D-glucoside + UDP-alpha-D-glucose = an anthocyanidin 3,5-di-O-beta-D-glucoside + UDP + 2 H(+). It functions in the pathway pigment biosynthesis; anthocyanin biosynthesis. Its function is as follows. Catalyzes the glucosylation at the O-5 position of anthocyanidin 3-glucosides to form anthocyanidin 3,5-di-O-glucosides using UDP-glucose as sugar donor. Anthocyanidin 3,5-di-O-glucosides are molecules that are responsible for pigmentation. Also acts on anthocyanidin 3-O-(6-O-malonylglucoside). Much less active with hydroxycinnamoylglucose derivatives. No activity in the absence of the 3-O-glucoside group. This chain is Anthocyanidin 3-O-glucoside 5-O-glucosyltransferase 1 (PF3R4), found in Perilla frutescens (Beefsteak mint).